The chain runs to 304 residues: Ribosomal RNA small subunit methyltransferase H (304 aa).

S-adenosyl-L-methionine-binding positions include 36–38 (CGH), Asp-55, Phe-81, Asp-102, and Gln-109.

The protein belongs to the methyltransferase superfamily. RsmH family.

The protein localises to the cytoplasm. It carries out the reaction cytidine(1402) in 16S rRNA + S-adenosyl-L-methionine = N(4)-methylcytidine(1402) in 16S rRNA + S-adenosyl-L-homocysteine + H(+). In terms of biological role, specifically methylates the N4 position of cytidine in position 1402 (C1402) of 16S rRNA. The protein is Ribosomal RNA small subunit methyltransferase H of Onion yellows phytoplasma (strain OY-M).